A 428-amino-acid polypeptide reads, in one-letter code: Enolase (428 aa).

(2R)-2-phosphoglycerate is bound at residue Gln163. Glu205 acts as the Proton donor in catalysis. Mg(2+)-binding residues include Asp242, Glu283, and Asp310. Positions 335, 364, 365, and 386 each coordinate (2R)-2-phosphoglycerate. Residue Lys335 is the Proton acceptor of the active site.

This sequence belongs to the enolase family. It depends on Mg(2+) as a cofactor.

The protein resides in the cytoplasm. Its subcellular location is the secreted. It is found in the cell surface. The catalysed reaction is (2R)-2-phosphoglycerate = phosphoenolpyruvate + H2O. Its pathway is carbohydrate degradation; glycolysis; pyruvate from D-glyceraldehyde 3-phosphate: step 4/5. In terms of biological role, catalyzes the reversible conversion of 2-phosphoglycerate (2-PG) into phosphoenolpyruvate (PEP). It is essential for the degradation of carbohydrates via glycolysis. This Sulfurihydrogenibium sp. (strain YO3AOP1) protein is Enolase.